The sequence spans 417 residues: Adrenocortical dysplasia protein homolog (417 aa).

The PWI motif lies at 11 to 13 (PWI). Serine 25 is subject to Phosphoserine. Residues 156 to 245 (ESASSSAGLT…SSIDSSQKAQ (90 aa)) are interaction with POT1. 2 stretches are compositionally biased toward polar residues: residues 237 to 250 (SIDS…NPAS) and 259 to 292 (SGAS…TSPR). The disordered stretch occupies residues 237-309 (SIDSSQKAQE…PCSSTPSSPL (73 aa)). Positions 296–309 (PSSTPCSSTPSSPL) are enriched in low complexity. Serine 313 and serine 317 each carry phosphoserine. Lysine 348 is covalently cross-linked (Glycyl lysine isopeptide (Lys-Gly) (interchain with G-Cter in SUMO2)).

In terms of assembly, component of the shelterin complex (telosome) composed of TERF1, TERF2, TINF2, TERF2IP ACD and POT1. Forms heterodimers with POT1. Identified in a complex with POT1 and single-stranded telomeric DNA. Interacts with STN1 and TINF2.

It localises to the nucleus. The protein resides in the chromosome. The protein localises to the telomere. In terms of biological role, component of the shelterin complex (telosome) that is involved in the regulation of telomere length and protection. Shelterin associates with arrays of double-stranded TTAGGG repeats added by telomerase and protects chromosome ends. Without its protective activity, telomeres are no longer hidden from the DNA damage surveillance and chromosome ends are inappropriately processed by DNA repair pathways. Promotes binding of POT1 to single-stranded telomeric DNA. Modulates the inhibitory effects of POT1 on telomere elongation. The ACD-POT1 heterodimer enhances telomere elongation by recruiting telomerase to telomeres and increasing its processivity. May play a role in organogenesis. This Rattus norvegicus (Rat) protein is Adrenocortical dysplasia protein homolog.